The chain runs to 198 residues: Angiopoietin-like protein 8 (198 aa).

The first 15 residues, 1-15, serve as a signal peptide directing secretion; the sequence is MAVLALCLLWTLASA.

Belongs to the ANGPTL8 family. As to quaternary structure, interacts with ANGPTL3. Proteolytically cleaved at the N-terminus. In terms of tissue distribution, expressed in liver and fat. Enriched in white and brown adipose tissues.

Its subcellular location is the secreted. In terms of biological role, hormone that acts as a blood lipid regulator by regulating serum triglyceride levels. May be involved in the metabolic transition between fasting and refeeding: required to direct fatty acids to adipose tissue for storage in the fed state. According to a report, may act by promoting ANGPTL3 cleavage. According to another study, not required for cleavage of ANGPTL3. This is Angiopoietin-like protein 8 from Mus musculus (Mouse).